Reading from the N-terminus, the 406-residue chain is Peptidase T (406 aa).

His-78 is a Zn(2+) binding site. The active site involves Asp-80. Asp-139 provides a ligand contact to Zn(2+). Glu-173 acts as the Proton acceptor in catalysis. Zn(2+) is bound by residues Glu-174, Asp-196, and His-378.

It belongs to the peptidase M20B family. The cofactor is Zn(2+).

The protein localises to the cytoplasm. It carries out the reaction Release of the N-terminal residue from a tripeptide.. Its function is as follows. Cleaves the N-terminal amino acid of tripeptides. This Clostridium perfringens (strain 13 / Type A) protein is Peptidase T.